We begin with the raw amino-acid sequence, 512 residues long: Glutathione-binding protein GsiB (512 aa).

Residues 1 to 26 form the signal peptide; the sequence is MTQFITHKWLAALGLASSIAAFPALA.

The protein belongs to the bacterial solute-binding protein 5 family. In terms of assembly, the complex is composed of two ATP-binding proteins (GsiA), two transmembrane proteins (GsiC and GsiD) and a solute-binding protein (GsiB).

Its subcellular location is the periplasm. Its function is as follows. Part of the ABC transporter complex GsiABCD involved in glutathione import. Binds glutathione. The protein is Glutathione-binding protein GsiB of Salmonella typhi.